A 500-amino-acid chain; its full sequence is Glucose-1-phosphate adenylyltransferase small subunit 1, chloroplastic/amyloplastic (500 aa).

Residues 1-50 (MAMMAMGAASWAPIPAPARAAAAFYPGRDLAAARRRRGAAARRPFVFTPR) constitute a chloroplast transit peptide.

The protein belongs to the bacterial/plant glucose-1-phosphate adenylyltransferase family. Heterotetramer composed of two small and two large subunits. In terms of tissue distribution, expressed in leaves.

Its subcellular location is the plastid. It is found in the chloroplast. It localises to the amyloplast. It carries out the reaction alpha-D-glucose 1-phosphate + ATP + H(+) = ADP-alpha-D-glucose + diphosphate. Its pathway is glycan biosynthesis; starch biosynthesis. Its activity is regulated as follows. Activated by 3'phosphoglycerate, inhibited by orthophosphate. Allosteric regulation. Its function is as follows. Involved in synthesis of starch. Catalyzes the synthesis of ADP-glucose, a molecule that serves as an activated glycosyl donor for alpha-1,4-glucan synthesis. Essential for starch synthesis in leaf chloroplasts and endosperm amyloplasts. The sequence is that of Glucose-1-phosphate adenylyltransferase small subunit 1, chloroplastic/amyloplastic from Oryza sativa subsp. japonica (Rice).